Here is a 446-residue protein sequence, read N- to C-terminus: Transcriptional regulator STERILE APETALA (446 aa).

Residues 1–10 (MSTSSSSSDN) show a composition bias toward low complexity. The segment at 1–32 (MSTSSSSSDNGAGGSGGVFEAPSPSRPRRGAN) is disordered.

As to expression, expressed in inflorescence and floral meristems, young floral organ primordia, and later in ovule primordia.

It is found in the nucleus. Its function is as follows. Transcriptional regulator involved in the specification of floral identity. Acts as A class cadastral protein by repressing the C class floral homeotic gene AGAMOUS in the external flower organs in association with APETALA2 and other repressors. Is required to maintain floral meristem identity in concert with AGAMOUS. Also interacts with APETALA2 to ensure the normal development of ovule. The polypeptide is Transcriptional regulator STERILE APETALA (SAP) (Arabidopsis thaliana (Mouse-ear cress)).